The chain runs to 155 residues: Transcription antitermination protein NusB (155 aa).

It belongs to the NusB family.

In terms of biological role, involved in transcription antitermination. Required for transcription of ribosomal RNA (rRNA) genes. Binds specifically to the boxA antiterminator sequence of the ribosomal RNA (rrn) operons. In Aliivibrio fischeri (strain ATCC 700601 / ES114) (Vibrio fischeri), this protein is Transcription antitermination protein NusB.